The primary structure comprises 1491 residues: CLIP-associating protein (1491 aa).

HEAT repeat units lie at residues 44-82 (CTDM…RLGS), 85-123 (NAYT…HRVL), 163-201 (QLSV…HVGD), and 402-440 (DAFC…YTHA). Disordered stretches follow at residues 537 to 586 (RERE…AVDT) and 600 to 739 (LYSR…NNPV). The span at 542–551 (GGGGGTGTGT) shows a compositional bias: gly residues. Over residues 569–580 (GTLQKPTPSMRS) the composition is skewed to polar residues. Residues serine 582, serine 626, and serine 634 each carry the phosphoserine modification. Polar residues predominate over residues 632–646 (LNSNSGGTPATTPGS). A Phosphothreonine modification is found at threonine 648. Polar residues-rich tracts occupy residues 657-671 (VSQS…SPST) and 699-712 (PRST…SPTR). Phosphoserine is present on residues serine 806, serine 817, serine 820, serine 822, and serine 824. 2 HEAT repeats span residues 874–912 (QQQL…VHAN) and 955–993 (QLQL…TYCK). Disordered stretches follow at residues 1065 to 1127 (HMRR…SVEQ) and 1167 to 1205 (GHLQ…ESAT). Low complexity-rich tracts occupy residues 1070–1097 (SQSC…QSPS), 1111–1124 (LSIS…RQSS), and 1181–1200 (ASLS…QSNT). 3 positions are modified to phosphoserine: serine 1120, serine 1123, and serine 1124. HEAT repeat units lie at residues 1289-1327 (NKHF…SNKM) and 1408-1446 (DAHL…VLGE).

Belongs to the CLASP family. As to quaternary structure, interacts with CLIP-190 and microtubules. As to expression, expressed in testis and ovary.

The protein resides in the cytoplasm. It localises to the cytoskeleton. It is found in the nucleus. The protein localises to the microtubule organizing center. Its subcellular location is the centrosome. The protein resides in the spindle. It localises to the cell projection. It is found in the growth cone. The protein localises to the cleavage furrow. Its function is as follows. Microtubule plus-end tracking protein that promotes the stabilization of dynamic microtubules. Required for several aspects of mitotic spindle formation including the formation of the overlapping central spindle microtubules and kinetochore attachment. Required for the incorporation of tubulin subunits at the plus ends of kinetochore microtubules during poleward microtubule flux. Acts antagonistically to Klp10A and Klp67A to maintain metaphase spindle length. Also required for guidance of CNS axons downstream of Abl. May function to identify a subset of microtubules that probe the peripheral growth cone domain, where guidance signals exert their influence on cytoskeletal organization. Also required during oogenesis for the organization of the polarized microtubule network inside the 16-cell cyst that ensures oocyte differentiation. The protein is CLIP-associating protein (chb) of Drosophila melanogaster (Fruit fly).